We begin with the raw amino-acid sequence, 476 residues long: Glycogen synthase (476 aa).

Residue Lys-15 coordinates ADP-alpha-D-glucose.

Belongs to the glycosyltransferase 1 family. Bacterial/plant glycogen synthase subfamily.

It carries out the reaction [(1-&gt;4)-alpha-D-glucosyl](n) + ADP-alpha-D-glucose = [(1-&gt;4)-alpha-D-glucosyl](n+1) + ADP + H(+). It functions in the pathway glycan biosynthesis; glycogen biosynthesis. Functionally, synthesizes alpha-1,4-glucan chains using ADP-glucose. The polypeptide is Glycogen synthase (Haemophilus influenzae (strain PittEE)).